Here is a 134-residue protein sequence, read N- to C-terminus: Methylglyoxal synthase (134 aa).

Residues 1–134 enclose the MGS-like domain; sequence MVNLNIALIA…GLLEWRNAVK (134 aa). Residues His-11, Lys-15, and 37–40 each bind substrate; that span reads TGAT. Residue Asp-63 is the Proton donor/acceptor of the active site. His-90 provides a ligand contact to substrate.

The protein belongs to the methylglyoxal synthase family.

It catalyses the reaction dihydroxyacetone phosphate = methylglyoxal + phosphate. Catalyzes the formation of methylglyoxal from dihydroxyacetone phosphate. This is Methylglyoxal synthase from Thermoanaerobacterium thermosaccharolyticum (Clostridium thermosaccharolyticum).